Consider the following 330-residue polypeptide: 2-methoxy-6-polyprenyl-1,4-benzoquinol methylase, mitochondrial (330 aa).

The transit peptide at 1–42 directs the protein to the mitochondrion; the sequence is MAAPRSWALWSFCGCGWSRAVSGCRLPGLRSSSPRGPLGARL. Residues T117, D171, and 199-200 contribute to the S-adenosyl-L-methionine site; that span reads DA.

This sequence belongs to the class I-like SAM-binding methyltransferase superfamily. MenG/UbiE family. In terms of assembly, component of a multi-subunit COQ enzyme complex, composed of at least COQ3, COQ4, COQ5, COQ6, COQ7 and COQ9. Interacts with PYURF; the interaction is direct, stabilizes COQ5 protein and associates PYURF with COQ enzyme complex.

Its subcellular location is the mitochondrion inner membrane. It catalyses the reaction 2-methoxy-6-(all-trans-decaprenyl)benzene-1,4-diol + S-adenosyl-L-methionine = 5-methoxy-2-methyl-3-(all-trans-decaprenyl)benzene-1,4-diol + S-adenosyl-L-homocysteine + H(+). It functions in the pathway cofactor biosynthesis; ubiquinone biosynthesis. Its function is as follows. Methyltransferase required for the conversion of 2-decaprenyl-6-methoxy-1,4-benzoquinol (DDMQH2) to 2-decaprenyl-3-methyl-6-methoxy-1,4-benzoquinol (DMQH2). The chain is 2-methoxy-6-polyprenyl-1,4-benzoquinol methylase, mitochondrial from Bos taurus (Bovine).